Consider the following 372-residue polypeptide: Serine/threonine-protein kinase 17B (372 aa).

Positions 33–293 constitute a Protein kinase domain; sequence TLTPKELGRG…AESCLSHSWL (261 aa). Residues 39 to 47 and Lys-62 each bind ATP; that span reads LGRGKFAVV. Catalysis depends on Asp-158, which acts as the Proton acceptor. Residues 305–348 form a disordered region; it reads EETSGSSQIQDLTLRSSEEKTSKSSCNGSCGAREDKENIPEDGS. The span at 307-319 shows a compositional bias: polar residues; the sequence is TSGSSQIQDLTLR.

It belongs to the protein kinase superfamily. CAMK Ser/Thr protein kinase family. DAP kinase subfamily. Interacts with CHP1; the interaction induces CHP1 to translocate from the Golgi to the nucleus. Autophosphorylated.

The protein localises to the nucleus. It localises to the cell membrane. It is found in the endoplasmic reticulum-Golgi intermediate compartment. The catalysed reaction is L-seryl-[protein] + ATP = O-phospho-L-seryl-[protein] + ADP + H(+). It catalyses the reaction L-threonyl-[protein] + ATP = O-phospho-L-threonyl-[protein] + ADP + H(+). Acts as a positive regulator of apoptosis. Phosphorylates myosin light chains. The sequence is that of Serine/threonine-protein kinase 17B (Stk17b) from Mus musculus (Mouse).